Consider the following 421-residue polypeptide: Telomeric repeat-binding factor 1 (421 aa).

Residues 1-30 (MAETVSSAARDAPSREGWTDSDSPEQEEVG) form a disordered region. A2 carries the post-translational modification N-acetylalanine. Residues 49 to 255 (ENAELVAEVE…AATKVVENEK (207 aa)) are TRFH mediates dimerization. K200 is covalently cross-linked (Glycyl lysine isopeptide (Lys-Gly) (interchain with G-Cter in SUMO2)). Residue S206 is modified to Phosphoserine; by ATM. The segment at 252–365 (ENEKARTQAS…PDTDDKSGRR (114 aa)) is interaction with RLIM. Residues 253–266 (NEKARTQASKDRPD) show a composition bias toward basic and acidic residues. The interval 253 to 366 (NEKARTQASK…DTDDKSGRRK (114 aa)) is disordered. Residues 284 to 310 (VNGQQSTETEPLVDTVSSIRSHKNALS) are compositionally biased toward polar residues. The Nuclear localization signal motif lies at 313–367 (KHRRAPSDFSRNEARTGTLQCETTMERNRRTSGRNRLCVSENQPDTDDKSGRRKR). The HTH myb-type domain maps to 362–419 (SGRRKRQTWLWEEDRILKCGVKKYGEGNWAKILSHYKFNNRTSVMLKDRWRTMKRLKL). A DNA-binding region (H-T-H motif) is located at residues 390-415 (WAKILSHYKFNNRTSVMLKDRWRTMK).

In terms of assembly, homodimer; can contain both isoforms. Found in a complex with POT1; TINF2 and TNKS1. Interacts with ATM, TINF2, TNKS1, TNKS2, PINX1, NEK2 and MAPRE1. Component of the shelterin complex (telosome) composed of TERF1, TERF2, TINF2, TERF2IP ACD and POT1. Interacts with RLIM (via N-terminus). Interacts with FBXO4. Interaction with TINF2 protects against interaction with FBXO4 and subsequent polyubiquitination and proteasomal degradation. Interacts with GNL3L; this interaction promotes homodimerization. Interacts with TIN2. Interactions with GNL3L and TIN2 are mutually exclusive. Interacts with RTEL1. Interacts with CCDC79/TERB1. Post-translationally, phosphorylated preferentially on Ser-219 in an ATM-dependent manner in response to ionizing DNA damage. ADP-ribosylation by TNKS1 or TNKS2 diminishes its ability to bind to telomeric DNA. In terms of processing, ubiquitinated by RLIM/RNF12, leading to its degradation by the proteasome. Ubiquitinated by a SCF (SKP1-CUL1-F-box protein) ubiquitin-protein ligase complex, leading to its degradation by the proteasome.

It localises to the nucleus. The protein localises to the chromosome. Its subcellular location is the telomere. The protein resides in the cytoplasm. It is found in the cytoskeleton. It localises to the spindle. In terms of biological role, binds the telomeric double-stranded 5'-TTAGGG-3' repeat and negatively regulates telomere length. Involved in the regulation of the mitotic spindle. Component of the shelterin complex (telosome) that is involved in the regulation of telomere length and protection. Shelterin associates with arrays of double-stranded 5'-TTAGGG-3' repeats added by telomerase and protects chromosome ends; without its protective activity, telomeres are no longer hidden from the DNA damage surveillance and chromosome ends are inappropriately processed by DNA repair pathways. In Mus musculus (Mouse), this protein is Telomeric repeat-binding factor 1 (Terf1).